The following is a 1012-amino-acid chain: Isoleucine--tRNA ligase, mitochondrial (1012 aa).

Residues 1-48 (MHWGLCPRGPGAAAVAAAGSFWGPARLPSRLGCLGMTRRLVVRSVAGA) constitute a mitochondrion transit peptide. Lys56 carries the post-translational modification N6-succinyllysine. Residue Lys74 is modified to N6-acetyllysine; alternate. At Lys74 the chain carries N6-succinyllysine; alternate. The 'HIGH' region motif lies at 116–126 (PYANGDPHVGH). The residue at position 194 (Lys194) is an N6-succinyllysine. Lys233 carries the N6-acetyllysine modification. Lys241 carries the post-translational modification N6-acetyllysine; alternate. Lys241 carries the N6-succinyllysine; alternate modification. An N6-succinyllysine mark is found at Lys479 and Lys500. Lys664 and Lys667 together coordinate ATP. A 'KMSKS' region motif is present at residues 664 to 668 (KMSKS). Lys725 carries the N6-acetyllysine modification. Lys775 and Lys781 each carry N6-acetyllysine; alternate. N6-succinyllysine; alternate is present on residues Lys775 and Lys781.

It belongs to the class-I aminoacyl-tRNA synthetase family.

It localises to the mitochondrion matrix. The catalysed reaction is tRNA(Ile) + L-isoleucine + ATP = L-isoleucyl-tRNA(Ile) + AMP + diphosphate. Functionally, aminoacyl-tRNA synthetase that catalyzes the specific attachment of isoleucine to its cognate tRNA (tRNA(Ile)). This Mus musculus (Mouse) protein is Isoleucine--tRNA ligase, mitochondrial.